Reading from the N-terminus, the 599-residue chain is NADH-quinone oxidoreductase subunit C/D (599 aa).

Residues 1-190 (MMIDQIAQES…DPFELTRQKE (190 aa)) are NADH dehydrogenase I subunit C. Residues 214–599 (DFMFLNLGPN…IDFVMSDVDR (386 aa)) form an NADH dehydrogenase I subunit D region.

This sequence in the N-terminal section; belongs to the complex I 30 kDa subunit family. The protein in the C-terminal section; belongs to the complex I 49 kDa subunit family. In terms of assembly, NDH-1 is composed of 13 different subunits. Subunits NuoB, CD, E, F, and G constitute the peripheral sector of the complex.

It is found in the cell inner membrane. The enzyme catalyses a quinone + NADH + 5 H(+)(in) = a quinol + NAD(+) + 4 H(+)(out). In terms of biological role, NDH-1 shuttles electrons from NADH, via FMN and iron-sulfur (Fe-S) centers, to quinones in the respiratory chain. The immediate electron acceptor for the enzyme in this species is believed to be ubiquinone. Couples the redox reaction to proton translocation (for every two electrons transferred, four hydrogen ions are translocated across the cytoplasmic membrane), and thus conserves the redox energy in a proton gradient. The chain is NADH-quinone oxidoreductase subunit C/D from Photorhabdus laumondii subsp. laumondii (strain DSM 15139 / CIP 105565 / TT01) (Photorhabdus luminescens subsp. laumondii).